The sequence spans 456 residues: Ribulose bisphosphate carboxylase large chain (456 aa).

At K7 the chain carries N6,N6,N6-trimethyllysine. Residues N116 and T166 each coordinate substrate. The active-site Proton acceptor is K168. K170 lines the substrate pocket. Mg(2+) is bound by residues K194, D196, and E197. K194 is subject to N6-carboxylysine. H287 acts as the Proton acceptor in catalysis. Substrate contacts are provided by R288, H320, and S372.

The protein belongs to the RuBisCO large chain family. Type I subfamily. As to quaternary structure, heterohexadecamer of 8 large chains and 8 small chains; disulfide-linked. The disulfide link is formed within the large subunit homodimers. It depends on Mg(2+) as a cofactor. In terms of processing, the disulfide bond which can form in the large chain dimeric partners within the hexadecamer appears to be associated with oxidative stress and protein turnover.

Its subcellular location is the plastid. The protein localises to the chloroplast. It catalyses the reaction 2 (2R)-3-phosphoglycerate + 2 H(+) = D-ribulose 1,5-bisphosphate + CO2 + H2O. The enzyme catalyses D-ribulose 1,5-bisphosphate + O2 = 2-phosphoglycolate + (2R)-3-phosphoglycerate + 2 H(+). Functionally, ruBisCO catalyzes two reactions: the carboxylation of D-ribulose 1,5-bisphosphate, the primary event in carbon dioxide fixation, as well as the oxidative fragmentation of the pentose substrate in the photorespiration process. Both reactions occur simultaneously and in competition at the same active site. This is Ribulose bisphosphate carboxylase large chain from Barnardia japonica (Chinese squill).